The primary structure comprises 412 residues: MAFHCQRDCYATELLTEVVSCHPAQLKLENGGKKNTVSGFNVLLKDTVLFPEGGGQPDDRGFIGEVPVLRVIRQGPDAVHFVASPLDPATEVLVKIDWNRRFDHMQQHSGQHLVTAIADSLYGFKTTSWDLGRQRSVIELDTPLVTAEQVEAIEKVANQKIREHVPVHVRLITVDDPEFDMVRSRGLPDDHAGPVRIIDIEGVDANMCCGTHVRNLSDLQMIKILGTEKGKKNKTNLIFLSGERVLKYVSRSYNTEKTLTSLLKNGPEEHIEAVDKLQKSVKALQKNNLTLLRDLAVLTAENFKSKADRGKFFSLHRKEGDNEFMNIIANEIGTEDTLLFLTIGDEKTSGLFLLAGPPGIVEKFGPRVCEILDGKGAGKCGRFQGKANKMSQRAEVEVLLQKVISSVEITQE.

4 residues coordinate Zn(2+): histidine 108, histidine 112, cysteine 208, and histidine 212.

This sequence belongs to the class-II aminoacyl-tRNA synthetase family. Alax-L subfamily. Zn(2+) serves as cofactor.

It is found in the cytoplasm. Its function is as follows. Functions in trans to edit the amino acid moiety from incorrectly charged tRNA(Ala). This Xenopus laevis (African clawed frog) protein is Alanyl-tRNA editing protein Aarsd1-B (aarsd1-b).